The primary structure comprises 252 residues: Hydroxyacylglutathione hydrolase (252 aa).

Residues H54, H56, D58, H59, H111, D128, and H166 each coordinate Zn(2+).

It belongs to the metallo-beta-lactamase superfamily. Glyoxalase II family. Monomer. The cofactor is Zn(2+).

The enzyme catalyses an S-(2-hydroxyacyl)glutathione + H2O = a 2-hydroxy carboxylate + glutathione + H(+). Its pathway is secondary metabolite metabolism; methylglyoxal degradation; (R)-lactate from methylglyoxal: step 2/2. Functionally, thiolesterase that catalyzes the hydrolysis of S-D-lactoyl-glutathione to form glutathione and D-lactic acid. In Photobacterium profundum (strain SS9), this protein is Hydroxyacylglutathione hydrolase.